A 344-amino-acid chain; its full sequence is MRSQRIVHIVSCHAEGEVGDVIVGGVAAPPGATLWEQSRWIARDQDLRNFVLNEPRGGVFRHANLLVPAKDPRAQMGWIIMEPADTPPMSGSNSLCVATVLLDSGILPMREPLTRLLLEAPGGLIEARAECRDGKAERVEIRNVPSFADRLDAWIEVEGLGSLQVDTAYGGDSFVIADARRLGFALRADEAAELVATGLKITHAANEQLGFRHPTNPDWDHLSFCQLAAPPERRDGVLGANNAVVIRPGKIDRSPCGTGCSARMAVLQAKGQLRVGERFVGRSIIGSEFHCHIESLTELGGRPAILPCLSGRAWITGIHQYLLDPDDPWPQGYRLSDTWPGGHC.

S90 acts as the Proton acceptor in catalysis. Substrate is bound by residues 91 to 92 (GS), D252, and 257 to 258 (GT).

It belongs to the proline racemase family.

It catalyses the reaction trans-3-hydroxy-L-proline = 1-pyrroline-2-carboxylate + H2O. The catalysed reaction is trans-3-hydroxy-L-proline = cis-3-hydroxy-D-proline. Functionally, bifunctional enzyme catalyzing both the dehydration of trans-3-hydroxy-L-proline (t3LHyp) to Delta(1)-pyrroline-2-carboxylate (Pyr2C) and 2-epimerization of t3LHyp to cis-3-hydroxy-D-proline (c3DHyp). No dehydratase activity with L-proline, trans-4-hydroxy-L-proline (t4LHyp), cis-4-hydroxy-L-proline (c4LHyp), D-proline, cis-4-hydroxy-D-proline (c4DHyp), trans-4-hydroxy-D-proline (t4DHyp) or L-serine as substrates. Displays neither t4LHyp epimerase nor proline racemase activity. Is likely involved in a degradation pathway that converts t3LHyp to L-proline, which would allow P.aeruginosa to grow on t3LHyp as a sole carbon source. The protein is Bifunctional trans-3-hydroxy-L-proline dehydratase/2-epimerase of Pseudomonas aeruginosa (strain ATCC 15692 / DSM 22644 / CIP 104116 / JCM 14847 / LMG 12228 / 1C / PRS 101 / PAO1).